Consider the following 275-residue polypeptide: Formamidopyrimidine-DNA glycosylase (275 aa).

Catalysis depends on Pro-2, which acts as the Schiff-base intermediate with DNA. The active-site Proton donor is Glu-3. Residue Lys-58 is the Proton donor; for beta-elimination activity of the active site. Positions 91 and 110 each coordinate DNA. The FPG-type zinc finger occupies 238–272; sequence QVYGQTGKPCPRCGQAIVKLKVGGRGTHICPKCQK. Arg-262 serves as the catalytic Proton donor; for delta-elimination activity.

Belongs to the FPG family. In terms of assembly, monomer. Requires Zn(2+) as cofactor.

The catalysed reaction is Hydrolysis of DNA containing ring-opened 7-methylguanine residues, releasing 2,6-diamino-4-hydroxy-5-(N-methyl)formamidopyrimidine.. It catalyses the reaction 2'-deoxyribonucleotide-(2'-deoxyribose 5'-phosphate)-2'-deoxyribonucleotide-DNA = a 3'-end 2'-deoxyribonucleotide-(2,3-dehydro-2,3-deoxyribose 5'-phosphate)-DNA + a 5'-end 5'-phospho-2'-deoxyribonucleoside-DNA + H(+). Involved in base excision repair of DNA damaged by oxidation or by mutagenic agents. Acts as a DNA glycosylase that recognizes and removes damaged bases. Has a preference for oxidized purines, such as 7,8-dihydro-8-oxoguanine (8-oxoG). Has AP (apurinic/apyrimidinic) lyase activity and introduces nicks in the DNA strand. Cleaves the DNA backbone by beta-delta elimination to generate a single-strand break at the site of the removed base with both 3'- and 5'-phosphates. In Streptococcus pyogenes serotype M18 (strain MGAS8232), this protein is Formamidopyrimidine-DNA glycosylase.